The following is a 146-amino-acid chain: MNTISGMSSLTAIGMLTPVQSMTCLMILFVSTAMCLYSQGFVLMGMLYVTMYVGAMAMLFLFMLSLLKMEYTPQGTITPLMVTLLAMCLMPLDITYETYGMVTQMENVTDELVMVGNQLYTEYAMLLMLTGMMLMLSVMGAMSITK.

The next 4 helical transmembrane spans lie at Leu-10–Val-30, Phe-41–Leu-61, Gly-75–Thr-95, and Ala-124–Ile-144.

The protein belongs to the complex I subunit 6 family.

It localises to the mitochondrion membrane. It catalyses the reaction a ubiquinone + NADH + 5 H(+)(in) = a ubiquinol + NAD(+) + 4 H(+)(out). Functionally, core subunit of the mitochondrial membrane respiratory chain NADH dehydrogenase (Complex I) that is believed to belong to the minimal assembly required for catalysis. Complex I functions in the transfer of electrons from NADH to the respiratory chain. The immediate electron acceptor for the enzyme is believed to be ubiquinone. The chain is NADH-ubiquinone oxidoreductase chain 6 (ND6) from Debaryomyces hansenii (strain ATCC 36239 / CBS 767 / BCRC 21394 / JCM 1990 / NBRC 0083 / IGC 2968) (Yeast).